The sequence spans 419 residues: Probable serine/threonine-protein kinase CST (419 aa).

The N-myristoyl glycine moiety is linked to residue G2. C4 carries S-palmitoyl cysteine lipidation. Positions 8 to 48 are disordered; sequence FSSSSPSKTGLHSHATTNNHSNGTEFSSTTGATTNSSVGQQ. Positions 15 to 48 are enriched in polar residues; it reads KTGLHSHATTNNHSNGTEFSSTTGATTNSSVGQQ. Positions 86 to 368 constitute a Protein kinase domain; it reads FKPDSMLGQG…KEVVEVLEHI (283 aa). 92–100 lines the ATP pocket; it reads LGQGGFGKV. At S117 the chain carries Phosphoserine. ATP is bound at residue K124. Residue Y169 is modified to Phosphotyrosine. The active-site Proton acceptor is the D218. A Phosphoserine modification is found at S222. 2 positions are modified to phosphothreonine: T253 and T258. Phosphotyrosine is present on Y266. Positions 378–390 are enriched in polar residues; the sequence is SSTKQAVANSSRS. The interval 378-419 is disordered; it reads SSTKQAVANSSRSSPHHYRYKAGALGAERKRATPGRFGSVEK.

This sequence belongs to the protein kinase superfamily. Ser/Thr protein kinase family. In terms of assembly, interacts with SOBIR1/EVR and RLK5/HAE. Post-translationally, autophosphorylated on serine, threonine and tyrosine residues.

It localises to the cell membrane. Its subcellular location is the nucleus. The catalysed reaction is L-seryl-[protein] + ATP = O-phospho-L-seryl-[protein] + ADP + H(+). It catalyses the reaction L-threonyl-[protein] + ATP = O-phospho-L-threonyl-[protein] + ADP + H(+). Functionally, acts as a spatial inhibitor of signaling that modulates abscission zone cell adhesion and expansion. Acts both directly and indirectly by physically interacting with RLK5/HAE and SOBIR1/EVR at the cell surface. In Arabidopsis thaliana (Mouse-ear cress), this protein is Probable serine/threonine-protein kinase CST.